The following is a 690-amino-acid chain: Elongation factor G (690 aa).

The tr-type G domain occupies 8 to 283 (SKCRNIGIMA…AVVDFLPAPN (276 aa)). GTP contacts are provided by residues 17 to 24 (AHIDAGKT), 81 to 85 (DTPGH), and 135 to 138 (NKMD).

It belongs to the TRAFAC class translation factor GTPase superfamily. Classic translation factor GTPase family. EF-G/EF-2 subfamily.

The protein resides in the cytoplasm. Its function is as follows. Catalyzes the GTP-dependent ribosomal translocation step during translation elongation. During this step, the ribosome changes from the pre-translocational (PRE) to the post-translocational (POST) state as the newly formed A-site-bound peptidyl-tRNA and P-site-bound deacylated tRNA move to the P and E sites, respectively. Catalyzes the coordinated movement of the two tRNA molecules, the mRNA and conformational changes in the ribosome. The polypeptide is Elongation factor G (Ehrlichia canis (strain Jake)).